The chain runs to 279 residues: Topoisomerase I damage affected protein 4 (279 aa).

Residues 1 to 32 (MNANSTTTAIGLTSPFEKLSFFPHSSNLILAH) lie on the Extracellular side of the membrane. A helical membrane pass occupies residues 33 to 53 (LHEIIFSFVFYQLAFSVVAPF). The Cytoplasmic segment spans residues 54–79 (LNKVVFRKHYTTIRDPLLKIDFNVHT). A TLC domain is found at 70–271 (LLKIDFNVHT…MIRIAKKLAK (202 aa)). A helical transmembrane segment spans residues 80-100 (VSMIQAVVSNTVLLPTLTTPM). Residues 101–110 (HYNVVTYTDS) are Extracellular-facing. The helical transmembrane segment at 111-131 (YSSMVSSLSAGYFIWDLTMCV) threads the bilayer. At 132–135 (RYFK) the chain is on the cytoplasmic side. A helical transmembrane segment spans residues 136-156 (LYGLEFTGHAIGSVYVMLLSL). Residues 157 to 162 (RPFCQP) are Extracellular-facing. A helical transmembrane segment spans residues 163-183 (WIGRFLIYEASTPFVNINWFI). At 184 to 192 (MQCNAKSKN) the chain is on the cytoplasmic side. Residues 193–213 (SIPLWFNVVNGLLLMTVFFVV) form a helical membrane-spanning segment. Over 214-238 (RICWGSIASALLFRQMWKVRDELPK) the chain is Extracellular. Residues 239 to 259 (FSAVTMMSLNIFMNLLNVLWF) traverse the membrane as a helical segment. Residues 260-279 (KKMIRIAKKLAKPAPTSKLD) are Cytoplasmic-facing.

Belongs to the TMEM56 family.

Its subcellular location is the membrane. The polypeptide is Topoisomerase I damage affected protein 4 (TDA4) (Saccharomyces cerevisiae (strain ATCC 204508 / S288c) (Baker's yeast)).